A 780-amino-acid polypeptide reads, in one-letter code: LPS-assembly protein LptD (780 aa).

The first 24 residues, 1 to 24 (MKKRFPTLLATLIWTALYSQHTLA), serve as a signal peptide directing secretion.

This sequence belongs to the LptD family. As to quaternary structure, component of the lipopolysaccharide transport and assembly complex. Interacts with LptE and LptA.

It is found in the cell outer membrane. Its function is as follows. Together with LptE, is involved in the assembly of lipopolysaccharide (LPS) at the surface of the outer membrane. The sequence is that of LPS-assembly protein LptD from Yersinia pestis bv. Antiqua (strain Antiqua).